Consider the following 192-residue polypeptide: UPF0149 protein KPK_0755 (192 aa).

The protein belongs to the UPF0149 family.

The protein is UPF0149 protein KPK_0755 of Klebsiella pneumoniae (strain 342).